The sequence spans 561 residues: Putative transport protein KPN78578_08530 (561 aa).

The next 5 helical transmembrane spans lie at 8–28 (LLNG…LCLG), 37–57 (LGNS…HFAI), 66–86 (FMLF…SIFF), 94–114 (MLAL…GKVF), and 158–178 (HLSL…IVGA). 2 RCK C-terminal domains span residues 202–288 (LDTD…SFRN) and 292–373 (VFDR…RIGF). The next 5 helical transmembrane spans lie at 383 to 403 (LLAF…TFQF), 406 to 426 (FSFG…LGFL), 447 to 467 (FGLM…INNG), 478 to 498 (AGLI…AYVL), and 540 to 560 (AIAN…WPGL).

This sequence belongs to the AAE transporter (TC 2.A.81) family. YbjL subfamily.

The protein localises to the cell membrane. This is Putative transport protein KPN78578_08530 from Klebsiella pneumoniae subsp. pneumoniae (strain ATCC 700721 / MGH 78578).